The primary structure comprises 493 residues: Cytoplasmic tRNA 2-thiolation protein 2 (493 aa).

Ser489 bears the Phosphoserine mark.

It belongs to the CTU2/NCS2 family. In terms of assembly, interacts with NCS6 and URM1. May act by forming a heterodimer with NCS6.

The protein resides in the cytoplasm. It participates in tRNA modification; 5-methoxycarbonylmethyl-2-thiouridine-tRNA biosynthesis. Plays a central role in 2-thiolation of mcm(5)S(2)U at tRNA wobble positions of tRNA(Lys), tRNA(Glu) and tRNA(Gln). May act by forming a heterodimer with NCS6 that ligates sulfur from thiocarboxylated URM1 onto the uridine of tRNAs at wobble position. Prior mcm(5) tRNA modification by the elongator complex is required for 2-thiolation. May also be involved in protein urmylation. The sequence is that of Cytoplasmic tRNA 2-thiolation protein 2 from Saccharomyces cerevisiae (strain RM11-1a) (Baker's yeast).